We begin with the raw amino-acid sequence, 285 residues long: Release factor glutamine methyltransferase (285 aa).

Positions 143 and 189 each coordinate S-adenosyl-L-methionine. Substrate is bound at residue 189–192 (NPPY).

It belongs to the protein N5-glutamine methyltransferase family. PrmC subfamily.

The enzyme catalyses L-glutaminyl-[peptide chain release factor] + S-adenosyl-L-methionine = N(5)-methyl-L-glutaminyl-[peptide chain release factor] + S-adenosyl-L-homocysteine + H(+). Its function is as follows. Methylates the class 1 translation termination release factors RF1/PrfA and RF2/PrfB on the glutamine residue of the universally conserved GGQ motif. The sequence is that of Release factor glutamine methyltransferase from Clostridium acetobutylicum (strain ATCC 824 / DSM 792 / JCM 1419 / IAM 19013 / LMG 5710 / NBRC 13948 / NRRL B-527 / VKM B-1787 / 2291 / W).